The following is a 150-amino-acid chain: UPF0506 protein SJCHGC02381 (150 aa).

The signal sequence occupies residues 1–18 (MNTCIQLLILCLVTVINS). N-linked (GlcNAc...) asparagine glycosylation is found at asparagine 20, asparagine 24, asparagine 32, asparagine 36, asparagine 48, asparagine 52, asparagine 64, and asparagine 110. The segment at 22-49 (TDNSTENTIKNETENATETELPETFENE) is disordered. Positions 36–49 (NATETELPETFENE) are enriched in acidic residues. 3 cysteine pairs are disulfide-bonded: cysteine 116–cysteine 130, cysteine 123–cysteine 134, and cysteine 129–cysteine 139.

Belongs to the UPF0506 family.

Its subcellular location is the secreted. This chain is UPF0506 protein SJCHGC02381, found in Schistosoma japonicum (Blood fluke).